The chain runs to 505 residues: MAESQSQGADQAQDLNNELKTRREKLVALRETGIAFPNDFRRDSTSDRLHAEFDGKENEELEELGVEVTVAGRMMTRRIMGKASFVTLQDVGGRIQLYVSRDDLAEGIYNEQFKKWDLGDILGARGKLFKTKTGELSIHCTELRLLTKALRPLPDKFHGLADQETRYRQRYLDLIANDESRNTFRIRSKVMAAIRSFMVDHGFMEVETPMMQVIPGGASARPFITHHNALDIDMYLRIAPELYLKRLVVGGFERVFEINRNFRNEGVSPRHNPEFTMMELYMAYADYKDLIVLTENLFRTLTQDVLGSTTVEYGDQTFDFGKPFEKLTMREAICKYRPETNVADLDDLEKATAIAQSLGIKIEKSWGLGRIVTEIFEETAESSLIQPTFITEYPAEVSPLARRNDQNPEITDRFEFFIGGREIGNGFSELNDAEDQAERFAQQVNAKDAGDDEAMFYDEDYVTALEHGLPPTAGLGIGIDRMVMLFTNSHTIRDVILFPAMRPQK.

Residues Glu415 and Glu422 each coordinate Mg(2+).

Belongs to the class-II aminoacyl-tRNA synthetase family. As to quaternary structure, homodimer. Mg(2+) serves as cofactor.

The protein resides in the cytoplasm. It carries out the reaction tRNA(Lys) + L-lysine + ATP = L-lysyl-tRNA(Lys) + AMP + diphosphate. In Pectobacterium carotovorum subsp. carotovorum (strain PC1), this protein is Lysine--tRNA ligase.